The chain runs to 572 residues: NADP-dependent malic enzyme (572 aa).

The residue at position 1 (Met1) is an N-acetylmethionine. Tyr102 acts as the Proton donor in catalysis. Position 155 (Arg155) interacts with NADP(+). Lys173 functions as the Proton acceptor in the catalytic mechanism. Positions 245, 246, and 269 each coordinate a divalent metal cation. NADP(+)-binding positions include Asp269 and 301-318; that span reads GAGE…MAME. Ser336 carries the phosphoserine modification. Position 408 (Asn408) interacts with NADP(+).

It belongs to the malic enzymes family. As to quaternary structure, homotetramer. Mg(2+) is required as a cofactor. Mn(2+) serves as cofactor. In terms of tissue distribution, ubiquitous. Up-regulated by 3,5,3'-triiodo-L-thyronine in the liver, kidney and heart.

It localises to the cytoplasm. The catalysed reaction is (S)-malate + NADP(+) = pyruvate + CO2 + NADPH. It catalyses the reaction oxaloacetate + H(+) = pyruvate + CO2. Functionally, catalyzes the oxidative decarboxylation of (S)-malate in the presence of NADP(+) and divalent metal ions, and decarboxylation of oxaloacetate. In Rattus norvegicus (Rat), this protein is NADP-dependent malic enzyme (Me1).